The following is a 455-amino-acid chain: Phosphoglucosamine mutase (455 aa).

Residue S102 is the Phosphoserine intermediate of the active site. The Mg(2+) site is built by S102, D241, D243, and D245. S102 is subject to Phosphoserine.

This sequence belongs to the phosphohexose mutase family. Requires Mg(2+) as cofactor. Post-translationally, activated by phosphorylation.

It catalyses the reaction alpha-D-glucosamine 1-phosphate = D-glucosamine 6-phosphate. In terms of biological role, catalyzes the conversion of glucosamine-6-phosphate to glucosamine-1-phosphate. The sequence is that of Phosphoglucosamine mutase from Legionella pneumophila (strain Corby).